The primary structure comprises 254 residues: 3-deoxy-manno-octulosonate cytidylyltransferase (254 aa).

It belongs to the KdsB family.

It localises to the cytoplasm. The catalysed reaction is 3-deoxy-alpha-D-manno-oct-2-ulosonate + CTP = CMP-3-deoxy-beta-D-manno-octulosonate + diphosphate. It participates in nucleotide-sugar biosynthesis; CMP-3-deoxy-D-manno-octulosonate biosynthesis; CMP-3-deoxy-D-manno-octulosonate from 3-deoxy-D-manno-octulosonate and CTP: step 1/1. It functions in the pathway bacterial outer membrane biogenesis; lipopolysaccharide biosynthesis. In terms of biological role, activates KDO (a required 8-carbon sugar) for incorporation into bacterial lipopolysaccharide in Gram-negative bacteria. In Pseudomonas syringae pv. tomato (strain ATCC BAA-871 / DC3000), this protein is 3-deoxy-manno-octulosonate cytidylyltransferase.